The sequence spans 856 residues: Rod cGMP-specific 3',5'-cyclic phosphodiesterase subunit beta (856 aa).

An N-acetylserine modification is found at S2. 2 consecutive GAF domains span residues 71–220 and 252–429; these read NMER…TLNL and DIER…GWSV. The region spanning 481–814 is the PDEase domain; that stretch reads EEDELGILLK…KEWKALADEY (334 aa). H557 serves as the catalytic Proton donor. Positions 561, 597, 598, and 718 each coordinate a divalent metal cation. Positions 823–833 are enriched in basic and acidic residues; that stretch reads EEKQQQEDRTT. A disordered region spans residues 823–842; that stretch reads EEKQQQEDRTTAKKAGTEIC. C853 carries S-geranylgeranyl cysteine lipidation. The propeptide at 854-856 is removed in mature form; sequence CIL.

The protein belongs to the cyclic nucleotide phosphodiesterase family. In terms of assembly, oligomer composed of two catalytic chains (alpha and beta), an inhibitory chain (gamma) and the delta chain. It depends on a divalent metal cation as a cofactor.

Its subcellular location is the membrane. The protein localises to the cell projection. It localises to the cilium. It is found in the photoreceptor outer segment. It carries out the reaction 3',5'-cyclic GMP + H2O = GMP + H(+). Its function is as follows. Rod-specific cGMP phosphodiesterase that catalyzes the hydrolysis of 3',5'-cyclic GMP. Necessary for the formation of a functional phosphodiesterase holoenzyme. Involved in retinal circadian rhythm photoentrainment via modulation of UVA and orange light-induced phase-shift of the retina clock. May participate in processes of transmission and amplification of the visual signal. The chain is Rod cGMP-specific 3',5'-cyclic phosphodiesterase subunit beta from Canis lupus familiaris (Dog).